The chain runs to 171 residues: MNTRQSSFSYEEILICGRGEMFGPGNAQLPLPPMLMFNRITDISETGGPNDKGYVRAEFDITPDLWFFPCHFMGDPVMPGCLGLDAMWQLTGFFLGWLGEAGKGRAISTGEVKFTGMVTPKTKLVEYGIDFKRVMRGRLVLGIADGWMKADGETIYKATDLRVGLFQEKAD.

The active site involves histidine 71.

It belongs to the thioester dehydratase family. FabA subfamily. Homodimer.

The protein resides in the cytoplasm. It carries out the reaction a (3R)-hydroxyacyl-[ACP] = a (2E)-enoyl-[ACP] + H2O. It catalyses the reaction (3R)-hydroxydecanoyl-[ACP] = (2E)-decenoyl-[ACP] + H2O. The enzyme catalyses (2E)-decenoyl-[ACP] = (3Z)-decenoyl-[ACP]. Its pathway is lipid metabolism; fatty acid biosynthesis. Necessary for the introduction of cis unsaturation into fatty acids. Catalyzes the dehydration of (3R)-3-hydroxydecanoyl-ACP to E-(2)-decenoyl-ACP and then its isomerization to Z-(3)-decenoyl-ACP. Can catalyze the dehydratase reaction for beta-hydroxyacyl-ACPs with saturated chain lengths up to 16:0, being most active on intermediate chain length. This chain is 3-hydroxydecanoyl-[acyl-carrier-protein] dehydratase, found in Rhizobium meliloti (strain 1021) (Ensifer meliloti).